A 943-amino-acid polypeptide reads, in one-letter code: Glutamate receptor ionotropic, NMDA 1 (943 aa).

The first 20 residues, 1–20, serve as a signal peptide directing secretion; the sequence is MSTMRLLTLALLFSCSFARA. The Extracellular segment spans residues 21-580; it reads ACDPKIVNIG…TLDSFMQPFQ (560 aa). N-linked (GlcNAc...) asparagine glycans are attached at residues asparagine 61, asparagine 224, asparagine 260, asparagine 297, asparagine 321, asparagine 371, asparagine 389, asparagine 461, asparagine 492, and asparagine 512. A disulfide bridge connects residues cysteine 79 and cysteine 329. Disulfide bonds link cysteine 441–cysteine 475 and cysteine 457–cysteine 476. Residues proline 537, threonine 539, and arginine 544 each coordinate glycine. Residues 581-601 form a helical membrane-spanning segment; the sequence is STLWLLVGLSVHVVAVMLYLL. Over 602-623 the chain is Cytoplasmic; sequence DRFSPFGRFKVNSEEEEEDALT. The discontinuously helical intramembrane region spans 624 to 645; it reads LSSAMWFSWGVLLNSGIGEGAP. The segment at 624–645 is pore-forming; that stretch reads LSSAMWFSWGVLLNSGIGEGAP. Residues 646 to 651 lie on the Cytoplasmic side of the membrane; sequence RSFSAR. A helical membrane pass occupies residues 652–668; the sequence is ILGMVWAGFAMIIVASY. Over 669–833 the chain is Extracellular; that stretch reads TANLAAFLVL…NAPATLTFEN (165 aa). Asparagine 695 carries N-linked (GlcNAc...) asparagine glycosylation. Residues serine 709 and aspartate 753 each contribute to the glycine site. Cysteine 765 and cysteine 819 are disulfide-bonded. Residue asparagine 792 is glycosylated (N-linked (GlcNAc...) asparagine). The chain crosses the membrane as a helical span at residues 834–854; it reads MAGVFMLVAGGIVAGIFLIFI. Topologically, residues 855–943 are cytoplasmic; that stretch reads EIAYKRHKDA…LSDPSVSTVV (89 aa). 4 positions are modified to phosphoserine: serine 910, serine 911, serine 917, and serine 918.

It belongs to the glutamate-gated ion channel (TC 1.A.10.1) family. NR1/GRIN1 subfamily. In terms of assembly, heterotetramer; the NMDAR subunits are modular and harbor tiered domains that function in concert to regulate opening and closing of the cation-selective ion channel pore. Forms heterotetrameric channels composed of two GluN1/zeta subunits (GRIN1), and two identical GluN2/epsilon subunits (GRIN2A, GRIN2B, GRIN2C or GRIN2D) or GluN3 subunits (GRIN3A or GRIN3B) (in vitro). Can also form heterotetrameric channels that contain at least two GluN1 subunits and at least two different GluN2 subunits (or a combination of one GluN2 and one GluN3 subunits) (in vitro). In vivo, the subunit composition may vary in function of the expression levels of the different subunits. Found in a complex with GRIN2A or GRIN2B, GRIN3A and PPP2CB. Found in a complex with GRIN2A or GRIN2B and GRIN3B. Interacts with SNX27 (via PDZ domain); the interaction is required for recycling to the plasma membrane when endocytosed and prevent degradation in lysosomes. Interacts with DLG4 and MPDZ. Interacts with LRFN1 and LRFN2. Interacts with MYZAP. Found in a complex with DLG4 and PRR7. Found in a complex with GRIN2B and PRR7. Interacts with PRR7; the interaction is reduced following NMDA receptor activity. Post-translationally, NMDA is probably regulated by C-terminal phosphorylation of an isoform of GRIN1 by PKC. Dephosphorylated on Ser-897 probably by protein phosphatase 2A (PPP2CB). Its phosphorylated state is influenced by the formation of the NMDAR-PPP2CB complex and the NMDAR channel activity.

The protein resides in the cell membrane. The protein localises to the postsynaptic cell membrane. It localises to the postsynaptic density membrane. Its subcellular location is the synaptic cell membrane. It catalyses the reaction Ca(2+)(in) = Ca(2+)(out). It carries out the reaction Na(+)(in) = Na(+)(out). The catalysed reaction is K(+)(in) = K(+)(out). Functionally, component of N-methyl-D-aspartate (NMDA) receptors (NMDARs) that function as heterotetrameric, ligand-gated cation channels with high calcium permeability and voltage-dependent block by Mg(2+). NMDARs participate in synaptic plasticity for learning and memory formation by contributing to the long-term potentiation (LTP). Channel activation requires binding of the neurotransmitter L-glutamate to the GluN2 subunit, glycine or D-serine binding to the GluN1 subunit, plus membrane depolarization to eliminate channel inhibition by Mg(2+). NMDARs mediate simultaneously the potasium efflux and the influx of calcium and sodium. Each GluN2 or GluN3 subunit confers differential attributes to channel properties, including activation, deactivation and desensitization kinetics, pH sensitivity, Ca2(+) permeability, and binding to allosteric modulators. The GluN3 subunits confer distinctive ion channel activation mechanism, which relies exclusively on glycine and does not involve glutamate. The chain is Glutamate receptor ionotropic, NMDA 1 from Canis lupus familiaris (Dog).